Here is a 308-residue protein sequence, read N- to C-terminus: UDP-3-O-acyl-N-acetylglucosamine deacetylase (308 aa).

Zn(2+)-binding residues include H77, H233, and D237. H260 acts as the Proton donor in catalysis.

It belongs to the LpxC family. Zn(2+) is required as a cofactor.

The enzyme catalyses a UDP-3-O-[(3R)-3-hydroxyacyl]-N-acetyl-alpha-D-glucosamine + H2O = a UDP-3-O-[(3R)-3-hydroxyacyl]-alpha-D-glucosamine + acetate. The protein operates within glycolipid biosynthesis; lipid IV(A) biosynthesis; lipid IV(A) from (3R)-3-hydroxytetradecanoyl-[acyl-carrier-protein] and UDP-N-acetyl-alpha-D-glucosamine: step 2/6. In terms of biological role, catalyzes the hydrolysis of UDP-3-O-myristoyl-N-acetylglucosamine to form UDP-3-O-myristoylglucosamine and acetate, the committed step in lipid A biosynthesis. This chain is UDP-3-O-acyl-N-acetylglucosamine deacetylase, found in Nitratidesulfovibrio vulgaris (strain ATCC 29579 / DSM 644 / CCUG 34227 / NCIMB 8303 / VKM B-1760 / Hildenborough) (Desulfovibrio vulgaris).